Here is a 248-residue protein sequence, read N- to C-terminus: Probable transcriptional regulatory protein Nham_3525 (248 aa).

The segment at 1–21 (MAGHSQFKNIMHRKGRQDAQK) is disordered.

This sequence belongs to the TACO1 family.

The protein localises to the cytoplasm. In Nitrobacter hamburgensis (strain DSM 10229 / NCIMB 13809 / X14), this protein is Probable transcriptional regulatory protein Nham_3525.